Consider the following 330-residue polypeptide: DNA-directed RNA polymerase subunit alpha (330 aa).

Residues 1–237 are alpha N-terminal domain (alpha-NTD); sequence MYTEINEMLT…RQLHAFVDMK (237 aa). Positions 251–330 are alpha C-terminal domain (alpha-CTD); it reads FDPVLLRSVD…ENWPPASLGE (80 aa).

It belongs to the RNA polymerase alpha chain family. Homodimer. The RNAP catalytic core consists of 2 alpha, 1 beta, 1 beta' and 1 omega subunit. When a sigma factor is associated with the core the holoenzyme is formed, which can initiate transcription.

It carries out the reaction RNA(n) + a ribonucleoside 5'-triphosphate = RNA(n+1) + diphosphate. DNA-dependent RNA polymerase catalyzes the transcription of DNA into RNA using the four ribonucleoside triphosphates as substrates. This is DNA-directed RNA polymerase subunit alpha from Legionella pneumophila subsp. pneumophila (strain Philadelphia 1 / ATCC 33152 / DSM 7513).